We begin with the raw amino-acid sequence, 932 residues long: Lipoxygenase 2.2, chloroplastic (932 aa).

One can recognise a PLAT domain in the interval methionine 79–proline 219. Positions serine 223–isoleucine 932 constitute a Lipoxygenase domain. Positions proline 270–tyrosine 284 are enriched in basic and acidic residues. The segment at proline 270–methionine 311 is disordered. A compositionally biased stretch (basic residues) spans proline 285–arginine 294. The span at serine 295–methionine 311 shows a compositional bias: basic and acidic residues. Fe cation-binding residues include histidine 588, histidine 593, histidine 778, asparagine 782, and isoleucine 932.

Belongs to the lipoxygenase family. It depends on Fe cation as a cofactor.

It is found in the plastid. The protein resides in the chloroplast. The enzyme catalyses (9Z,12Z)-octadecadienoate + O2 = (13S)-hydroperoxy-(9Z,11E)-octadecadienoate. It carries out the reaction (9Z,12Z,15Z)-octadecatrienoate + O2 = (13S)-hydroperoxy-(9Z,11E,15Z)-octadecatrienoate. It functions in the pathway lipid metabolism; oxylipin biosynthesis. Its function is as follows. Plant lipoxygenase may be involved in a number of diverse aspects of plant physiology including growth and development, pest resistance, and senescence or responses to wounding. This enzyme exhibits linoleate 13-lipoxygenase activity. In Hordeum vulgare (Barley), this protein is Lipoxygenase 2.2, chloroplastic (LOX2.2).